The following is a 217-amino-acid chain: GTP cyclohydrolase 1 (217 aa).

Zn(2+)-binding residues include C109, H112, and C180.

Belongs to the GTP cyclohydrolase I family. As to quaternary structure, homomer.

The enzyme catalyses GTP + H2O = 7,8-dihydroneopterin 3'-triphosphate + formate + H(+). It functions in the pathway cofactor biosynthesis; 7,8-dihydroneopterin triphosphate biosynthesis; 7,8-dihydroneopterin triphosphate from GTP: step 1/1. The polypeptide is GTP cyclohydrolase 1 (Aliivibrio salmonicida (strain LFI1238) (Vibrio salmonicida (strain LFI1238))).